The following is a 489-amino-acid chain: UDP-N-acetylmuramoyl-L-alanyl-D-glutamate--2,6-diaminopimelate ligase (489 aa).

Ser30 contributes to the UDP-N-acetyl-alpha-D-muramoyl-L-alanyl-D-glutamate binding site. 108–114 (GTNGKTT) contacts ATP. UDP-N-acetyl-alpha-D-muramoyl-L-alanyl-D-glutamate contacts are provided by residues Asn149, 150-151 (TT), Ser177, Gln183, and Arg185. Residue Lys217 is modified to N6-carboxylysine. Meso-2,6-diaminopimelate contacts are provided by residues Arg383, 407-410 (DNPR), Gly459, and Glu463. The Meso-diaminopimelate recognition motif signature appears at 407–410 (DNPR).

Belongs to the MurCDEF family. MurE subfamily. The cofactor is Mg(2+). In terms of processing, carboxylation is probably crucial for Mg(2+) binding and, consequently, for the gamma-phosphate positioning of ATP.

It localises to the cytoplasm. It carries out the reaction UDP-N-acetyl-alpha-D-muramoyl-L-alanyl-D-glutamate + meso-2,6-diaminopimelate + ATP = UDP-N-acetyl-alpha-D-muramoyl-L-alanyl-gamma-D-glutamyl-meso-2,6-diaminopimelate + ADP + phosphate + H(+). The protein operates within cell wall biogenesis; peptidoglycan biosynthesis. Its function is as follows. Catalyzes the addition of meso-diaminopimelic acid to the nucleotide precursor UDP-N-acetylmuramoyl-L-alanyl-D-glutamate (UMAG) in the biosynthesis of bacterial cell-wall peptidoglycan. The polypeptide is UDP-N-acetylmuramoyl-L-alanyl-D-glutamate--2,6-diaminopimelate ligase (Geobacillus kaustophilus (strain HTA426)).